The following is a 93-amino-acid chain: UPF0337 protein Bd3330 (93 aa).

It belongs to the UPF0337 (CsbD) family.

This chain is UPF0337 protein Bd3330, found in Bdellovibrio bacteriovorus (strain ATCC 15356 / DSM 50701 / NCIMB 9529 / HD100).